Consider the following 529-residue polypeptide: Peptide chain release factor 3 (529 aa).

One can recognise a tr-type G domain in the interval 11–280; the sequence is KKRRTFAIIS…GLVEWAPAPL (270 aa). Residues 20 to 27, 88 to 92, and 142 to 145 each bind GTP; these read SHPDAGKT, DTPGH, and NKLD.

It belongs to the TRAFAC class translation factor GTPase superfamily. Classic translation factor GTPase family. PrfC subfamily.

It is found in the cytoplasm. In terms of biological role, increases the formation of ribosomal termination complexes and stimulates activities of RF-1 and RF-2. It binds guanine nucleotides and has strong preference for UGA stop codons. It may interact directly with the ribosome. The stimulation of RF-1 and RF-2 is significantly reduced by GTP and GDP, but not by GMP. The chain is Peptide chain release factor 3 from Alteromonas mediterranea (strain DSM 17117 / CIP 110805 / LMG 28347 / Deep ecotype).